Here is a 351-residue protein sequence, read N- to C-terminus: Holliday junction branch migration complex subunit RuvB (351 aa).

The segment at 1–189 is large ATPase domain (RuvB-L); it reads MTAHDADWSD…FGFTAHMDFY (189 aa). ATP-binding positions include Leu-28, Arg-29, Gly-70, Lys-73, Thr-74, Ser-75, 136–138, Arg-179, Tyr-189, and Arg-226; that span reads EDF. Mg(2+) is bound at residue Thr-74. The tract at residues 190–260 is small ATPAse domain (RuvB-S); that stretch reads EPAELQQVLA…VAKAALAVYD (71 aa). Positions 263–351 are head domain (RuvB-H); it reads ELGLDRLDRA…AGLGQPGLFD (89 aa). The DNA site is built by Arg-318 and Arg-323.

Belongs to the RuvB family. Homohexamer. Forms an RuvA(8)-RuvB(12)-Holliday junction (HJ) complex. HJ DNA is sandwiched between 2 RuvA tetramers; dsDNA enters through RuvA and exits via RuvB. An RuvB hexamer assembles on each DNA strand where it exits the tetramer. Each RuvB hexamer is contacted by two RuvA subunits (via domain III) on 2 adjacent RuvB subunits; this complex drives branch migration. In the full resolvosome a probable DNA-RuvA(4)-RuvB(12)-RuvC(2) complex forms which resolves the HJ.

Its subcellular location is the cytoplasm. It catalyses the reaction ATP + H2O = ADP + phosphate + H(+). Its function is as follows. The RuvA-RuvB-RuvC complex processes Holliday junction (HJ) DNA during genetic recombination and DNA repair, while the RuvA-RuvB complex plays an important role in the rescue of blocked DNA replication forks via replication fork reversal (RFR). RuvA specifically binds to HJ cruciform DNA, conferring on it an open structure. The RuvB hexamer acts as an ATP-dependent pump, pulling dsDNA into and through the RuvAB complex. RuvB forms 2 homohexamers on either side of HJ DNA bound by 1 or 2 RuvA tetramers; 4 subunits per hexamer contact DNA at a time. Coordinated motions by a converter formed by DNA-disengaged RuvB subunits stimulates ATP hydrolysis and nucleotide exchange. Immobilization of the converter enables RuvB to convert the ATP-contained energy into a lever motion, pulling 2 nucleotides of DNA out of the RuvA tetramer per ATP hydrolyzed, thus driving DNA branch migration. The RuvB motors rotate together with the DNA substrate, which together with the progressing nucleotide cycle form the mechanistic basis for DNA recombination by continuous HJ branch migration. Branch migration allows RuvC to scan DNA until it finds its consensus sequence, where it cleaves and resolves cruciform DNA. In Mycobacterium avium (strain 104), this protein is Holliday junction branch migration complex subunit RuvB.